Reading from the N-terminus, the 203-residue chain is Large ribosomal subunit protein bL25 (203 aa).

It belongs to the bacterial ribosomal protein bL25 family. CTC subfamily. As to quaternary structure, part of the 50S ribosomal subunit; part of the 5S rRNA/L5/L18/L25 subcomplex. Contacts the 5S rRNA. Binds to the 5S rRNA independently of L5 and L18.

Functionally, this is one of the proteins that binds to the 5S RNA in the ribosome where it forms part of the central protuberance. In Paraburkholderia phymatum (strain DSM 17167 / CIP 108236 / LMG 21445 / STM815) (Burkholderia phymatum), this protein is Large ribosomal subunit protein bL25.